We begin with the raw amino-acid sequence, 197 residues long: Potassium-transporting ATPase KdpC subunit (197 aa).

Residues 7–27 (PAFISLILFTLLFGLIYPLTV) form a helical membrane-spanning segment.

This sequence belongs to the KdpC family. The system is composed of three essential subunits: KdpA, KdpB and KdpC.

It is found in the cell inner membrane. In terms of biological role, part of the high-affinity ATP-driven potassium transport (or Kdp) system, which catalyzes the hydrolysis of ATP coupled with the electrogenic transport of potassium into the cytoplasm. This subunit acts as a catalytic chaperone that increases the ATP-binding affinity of the ATP-hydrolyzing subunit KdpB by the formation of a transient KdpB/KdpC/ATP ternary complex. The chain is Potassium-transporting ATPase KdpC subunit from Beijerinckia indica subsp. indica (strain ATCC 9039 / DSM 1715 / NCIMB 8712).